The chain runs to 377 residues: N-acetyldiaminopimelate deacetylase (377 aa).

Asp-69 is a catalytic residue. Residue Glu-128 is the Proton acceptor of the active site.

The protein belongs to the peptidase M20A family. N-acetyldiaminopimelate deacetylase subfamily.

It carries out the reaction N-acetyl-(2S,6S)-2,6-diaminopimelate + H2O = (2S,6S)-2,6-diaminopimelate + acetate. Its pathway is amino-acid biosynthesis; L-lysine biosynthesis via DAP pathway; LL-2,6-diaminopimelate from (S)-tetrahydrodipicolinate (acetylase route): step 3/3. Its function is as follows. Catalyzes the conversion of N-acetyl-diaminopimelate to diaminopimelate and acetate. In Streptococcus sanguinis (strain SK36), this protein is N-acetyldiaminopimelate deacetylase.